The chain runs to 246 residues: MACVKGSNAEKTNAIIMAAGLGTRMAPLTKTTPKPLISVNGTPMIETVINALVTAGVERISVVVGYLKEQFCYLEERYPAVVLVENTEYLEKNNISSIYAAVDVLEQGATFICEADLVISDEHIFQPRPSRSCYFGRKFSGHTGDWVFDLDDSGKIVRIGKGGSDTYAMVGLSYFSAPDAKRLARFMHDAYKETGHEQLFWDDVVNNHIAELDLSIHPVEAQQIAELDSVAELAAFDHGYVYLLRS.

Ala19, Gly20, Lys34, Ser97, Glu114, and Ala115 together coordinate CMP-(2-aminoethyl)phosphonate. Positions 116 and 145 each coordinate Mg(2+). CMP-(2-aminoethyl)phosphonate-binding residues include Asp145, Lys161, and Asp202. Residues Glu226 and Asp228 each contribute to the Mg(2+) site.

The protein belongs to the LicC/PntC cytidylyltransferase family. As to quaternary structure, monomer. Mg(2+) serves as cofactor.

The catalysed reaction is (2-aminoethyl)phosphonate + CTP = CMP-(2-aminoethyl)phosphonate + diphosphate. Its pathway is phosphorus metabolism; phosphonate biosynthesis. Its function is as follows. Cytidylyltransferase involved in the biosynthesis of cell-surface phosphonates. Catalyzes the activation of 2-aminoethylphosphonate (AEP) to CMP-2-aminoethylphosphonate (CMP-AEP). Can also use phosphocholine, with much lower efficiency. Exhibits strong activity towards CTP, limited activity towards ATP and no activity with GTP. This chain is 2-aminoethylphosphonate cytidylyltransferase, found in Lancefieldella rimae (strain ATCC 49626 / DSM 7090 / CCUG 31168 / NBRC 15546 / VPI D140H-11A) (Atopobium rimae).